Reading from the N-terminus, the 318-residue chain is Ribose-phosphate pyrophosphokinase 2 (318 aa).

Aspartate 132, histidine 134, histidine 143, and aspartate 147 together coordinate Mg(2+).

It belongs to the ribose-phosphate pyrophosphokinase family.

It is found in the cytoplasm. It carries out the reaction D-ribose 5-phosphate + ATP = 5-phospho-alpha-D-ribose 1-diphosphate + AMP + H(+). It participates in metabolic intermediate biosynthesis; 5-phospho-alpha-D-ribose 1-diphosphate biosynthesis; 5-phospho-alpha-D-ribose 1-diphosphate from D-ribose 5-phosphate (route I): step 1/1. Functionally, 5-phosphoribose 1-diphosphate synthase involved in nucleotide, histidine, and tryptophan biosynthesis. Active in heteromultimeric complexes with other 5-phosphoribose 1-diphosphate synthases (PRS2, PRS3, PRS4 and PRS5). This chain is Ribose-phosphate pyrophosphokinase 2 (PRS2), found in Saccharomyces cerevisiae (strain ATCC 204508 / S288c) (Baker's yeast).